The chain runs to 364 residues: DNA replication and repair protein RecF (364 aa).

30 to 37 (GNNGQGKT) lines the ATP pocket.

The protein belongs to the RecF family.

It is found in the cytoplasm. The RecF protein is involved in DNA metabolism; it is required for DNA replication and normal SOS inducibility. RecF binds preferentially to single-stranded, linear DNA. It also seems to bind ATP. The chain is DNA replication and repair protein RecF from Geotalea daltonii (strain DSM 22248 / JCM 15807 / FRC-32) (Geobacter daltonii).